Reading from the N-terminus, the 84-residue chain is MAKTQSPLQWLATTIIRGYQLLISPMLGPRCRFNPTCSHYAIEAIRLHGFVKGCWFAAKRILRCHPLHPGGEDPVPNKKHRCDK.

This sequence belongs to the UPF0161 family.

It is found in the cell inner membrane. Its function is as follows. Could be involved in insertion of integral membrane proteins into the membrane. This chain is Putative membrane protein insertion efficiency factor, found in Shewanella halifaxensis (strain HAW-EB4).